Here is a 434-residue protein sequence, read N- to C-terminus: Enolase 2 (434 aa).

Gln171 provides a ligand contact to (2R)-2-phosphoglycerate. The active-site Proton donor is Glu213. Mg(2+) contacts are provided by Asp250, Glu293, and Asp320. (2R)-2-phosphoglycerate is bound by residues Lys345, Arg374, Ser375, and Lys396. Residue Lys345 is the Proton acceptor of the active site.

The protein belongs to the enolase family. Requires Mg(2+) as cofactor.

The protein resides in the cytoplasm. Its subcellular location is the secreted. It localises to the cell surface. It catalyses the reaction (2R)-2-phosphoglycerate = phosphoenolpyruvate + H2O. Its pathway is carbohydrate degradation; glycolysis; pyruvate from D-glyceraldehyde 3-phosphate: step 4/5. Its function is as follows. Catalyzes the reversible conversion of 2-phosphoglycerate (2-PG) into phosphoenolpyruvate (PEP). It is essential for the degradation of carbohydrates via glycolysis. This Streptomyces coelicolor (strain ATCC BAA-471 / A3(2) / M145) protein is Enolase 2.